A 78-amino-acid chain; its full sequence is uncharacterized protein (78 aa).

Residues 51–78 form a disordered region; the sequence is GGKWDGGGSGGKWNGGGGSGGGSWKKWN.

This is an uncharacterized protein from Dictyostelium discoideum (Social amoeba).